The chain runs to 354 residues: MTELKNDRYLRALLRQPVDVTPVWMMRQAGRYLPEYKATRAQAGDFMSLCKNAELACEVTLQPLRRYPLDAAILFSDILTIPDAMGLGLYFEAGEGPRFTAPVTCKADVDKLPIPDPEDELGYVMNAVRTIRRELKGEVPLIGFSGSPWTLATYMVEGGSSKAFTVIKKMMYADPQALHLLLDKLAKSVTLYLNAQIKAGAQSVMIFDTWGGVLTGRDYQQFSLYYMHKIVDGLLRENDGRRVPVTLFTKGGGQWLEAMAETGCDALGLDWTTDIADARRRVGHKVALQGNMDPSMLYAPPARIEDEVATILAGFGQGEGHVFNLGHGIHQDVPPEHAGAFVEAVHQLSAQYHN.

Substrate contacts are provided by residues 27–31, aspartate 77, tyrosine 154, threonine 209, and histidine 327; that span reads RQAGR.

The protein belongs to the uroporphyrinogen decarboxylase family. As to quaternary structure, homodimer.

The protein resides in the cytoplasm. The catalysed reaction is uroporphyrinogen III + 4 H(+) = coproporphyrinogen III + 4 CO2. Its pathway is porphyrin-containing compound metabolism; protoporphyrin-IX biosynthesis; coproporphyrinogen-III from 5-aminolevulinate: step 4/4. Functionally, catalyzes the decarboxylation of four acetate groups of uroporphyrinogen-III to yield coproporphyrinogen-III. This Salmonella agona (strain SL483) protein is Uroporphyrinogen decarboxylase.